The primary structure comprises 244 residues: 1-(5-phosphoribosyl)-5-[(5-phosphoribosylamino)methylideneamino] imidazole-4-carboxamide isomerase (244 aa).

D10 (proton acceptor) is an active-site residue. D132 functions as the Proton donor in the catalytic mechanism.

This sequence belongs to the HisA/HisF family.

Its subcellular location is the cytoplasm. It catalyses the reaction 1-(5-phospho-beta-D-ribosyl)-5-[(5-phospho-beta-D-ribosylamino)methylideneamino]imidazole-4-carboxamide = 5-[(5-phospho-1-deoxy-D-ribulos-1-ylimino)methylamino]-1-(5-phospho-beta-D-ribosyl)imidazole-4-carboxamide. It participates in amino-acid biosynthesis; L-histidine biosynthesis; L-histidine from 5-phospho-alpha-D-ribose 1-diphosphate: step 4/9. The protein is 1-(5-phosphoribosyl)-5-[(5-phosphoribosylamino)methylideneamino] imidazole-4-carboxamide isomerase of Xanthomonas euvesicatoria pv. vesicatoria (strain 85-10) (Xanthomonas campestris pv. vesicatoria).